The following is a 267-amino-acid chain: Imidazole glycerol phosphate synthase subunit HisF (267 aa).

Residues Asp-22 and Asp-141 contribute to the active site.

Belongs to the HisA/HisF family. Heterodimer of HisH and HisF.

The protein resides in the cytoplasm. The enzyme catalyses 5-[(5-phospho-1-deoxy-D-ribulos-1-ylimino)methylamino]-1-(5-phospho-beta-D-ribosyl)imidazole-4-carboxamide + L-glutamine = D-erythro-1-(imidazol-4-yl)glycerol 3-phosphate + 5-amino-1-(5-phospho-beta-D-ribosyl)imidazole-4-carboxamide + L-glutamate + H(+). It participates in amino-acid biosynthesis; L-histidine biosynthesis; L-histidine from 5-phospho-alpha-D-ribose 1-diphosphate: step 5/9. Functionally, IGPS catalyzes the conversion of PRFAR and glutamine to IGP, AICAR and glutamate. The HisF subunit catalyzes the cyclization activity that produces IGP and AICAR from PRFAR using the ammonia provided by the HisH subunit. The polypeptide is Imidazole glycerol phosphate synthase subunit HisF (Mycobacterium tuberculosis (strain ATCC 25177 / H37Ra)).